Reading from the N-terminus, the 102-residue chain is Circadian clock protein KaiB3 (102 aa).

Belongs to the KaiB family. In terms of assembly, purifies as a monomer and homotetramer. Interacts with KaiC1 and KaiC3.

Functionally, a paralog of KaiB1, the major clock oscillator protein in this species. KaiB3 and KaiC3 may cross talk with the core oscillator. The monomer reduces the ATPase activity of KaiC3 by 55%, the homotetramer has no effect. In terms of biological role, a metamorphic protein which may reversibly switch between an inactive tetrameric fold and a rare thioredoxin-like monomeric fold (KaiB(fs)). In Synechocystis sp. (strain ATCC 27184 / PCC 6803 / Kazusa), this protein is Circadian clock protein KaiB3.